The following is a 316-amino-acid chain: Nautilin-63 (316 aa).

4 disordered regions span residues 1 to 26, 149 to 173, 189 to 238, and 259 to 278; these read IPDLASSRSTLPVLTKGPTGLLGPRG, PFPTSRSTYGPSGSQPGKKGVVTPF, DSRC…GIAS, and PPTSPFFTGPSGYTSDGLNK. Low complexity predominate over residues 10 to 26; the sequence is TLPVLTKGPTGLLGPRG. Polar residues-rich tracts occupy residues 152–163, 207–216, and 269–278; these read TSRSTYGPSGSQ, GHSSPATLNS, and SGYTSDGLNK.

Post-translationally, glycosylated; contains mainly glucose, galactose, galactosamine, glucosamine and glucuronic acid. As to expression, component of the acid-soluble organic matrix of nacreous shell layers (at protein level).

The protein localises to the secreted. Its function is as follows. Involved in nacre formation. Affects morphology of calcite crystals in vitro but does not inhibit their formation. Binds chitin. This is Nautilin-63 from Nautilus macromphalus (Bellybutton nautilus).